The primary structure comprises 404 residues: Cysteine desulfurase IscS (404 aa).

Pyridoxal 5'-phosphate-binding positions include 75-76, N155, Q183, and 203-205; these read AT and SAH. K206 is subject to N6-(pyridoxal phosphate)lysine. Position 243 (T243) interacts with pyridoxal 5'-phosphate. C328 serves as the catalytic Cysteine persulfide intermediate. C328 provides a ligand contact to [2Fe-2S] cluster.

Belongs to the class-V pyridoxal-phosphate-dependent aminotransferase family. NifS/IscS subfamily. As to quaternary structure, homodimer. Forms a heterotetramer with IscU, interacts with other sulfur acceptors. It depends on pyridoxal 5'-phosphate as a cofactor.

It is found in the cytoplasm. The enzyme catalyses (sulfur carrier)-H + L-cysteine = (sulfur carrier)-SH + L-alanine. It participates in cofactor biosynthesis; iron-sulfur cluster biosynthesis. Functionally, master enzyme that delivers sulfur to a number of partners involved in Fe-S cluster assembly, tRNA modification or cofactor biosynthesis. Catalyzes the removal of elemental sulfur atoms from cysteine to produce alanine. Functions as a sulfur delivery protein for Fe-S cluster synthesis onto IscU, an Fe-S scaffold assembly protein, as well as other S acceptor proteins. The polypeptide is Cysteine desulfurase IscS (Pseudomonas putida (strain ATCC 700007 / DSM 6899 / JCM 31910 / BCRC 17059 / LMG 24140 / F1)).